Here is a 243-residue protein sequence, read N- to C-terminus: Carboxy-S-adenosyl-L-methionine synthase (243 aa).

S-adenosyl-L-methionine-binding positions include Y40, 65 to 67, 90 to 91, 118 to 119, N133, and R200; these read GCS, DN, and DI.

It belongs to the class I-like SAM-binding methyltransferase superfamily. Cx-SAM synthase family. As to quaternary structure, homodimer.

The enzyme catalyses prephenate + S-adenosyl-L-methionine = carboxy-S-adenosyl-L-methionine + 3-phenylpyruvate + H2O. In terms of biological role, catalyzes the conversion of S-adenosyl-L-methionine (SAM) to carboxy-S-adenosyl-L-methionine (Cx-SAM). This Shewanella oneidensis (strain ATCC 700550 / JCM 31522 / CIP 106686 / LMG 19005 / NCIMB 14063 / MR-1) protein is Carboxy-S-adenosyl-L-methionine synthase.